Here is a 300-residue protein sequence, read N- to C-terminus: Cation-efflux pump FieF (300 aa).

A helical membrane pass occupies residues leucine 24 to valine 44. 2 residues coordinate Zn(2+): aspartate 45 and aspartate 49. A run of 2 helical transmembrane segments spans residues alanine 82 to isoleucine 102 and alanine 114 to phenylalanine 134. Positions 153 and 157 each coordinate Zn(2+). 2 helical membrane passes run serine 156 to histidine 176 and alanine 178 to glycine 198.

This sequence belongs to the cation diffusion facilitator (CDF) transporter (TC 2.A.4) family. FieF subfamily. In terms of assembly, homodimer.

The protein resides in the cell inner membrane. The catalysed reaction is Zn(2+)(in) + H(+)(out) = Zn(2+)(out) + H(+)(in). It catalyses the reaction Cd(2+)(in) + H(+)(out) = Cd(2+)(out) + H(+)(in). It carries out the reaction Fe(2+)(in) + H(+)(out) = Fe(2+)(out) + H(+)(in). Divalent metal cation transporter which exports Zn(2+), Cd(2+) and possibly Fe(2+). May be involved in zinc and iron detoxification by efflux. The polypeptide is Cation-efflux pump FieF (Klebsiella pneumoniae (strain 342)).